Here is a 201-residue protein sequence, read N- to C-terminus: Cysteine dioxygenase type 1 (201 aa).

The Fe cation site is built by His-86, His-88, and His-141. The segment at residues Cys-93–Tyr-158 is a cross-link (3'-(S-cysteinyl)-tyrosine (Cys-Tyr)).

This sequence belongs to the cysteine dioxygenase family. In terms of assembly, monomer. Fe cation is required as a cofactor. It depends on Ni(2+) as a cofactor. Requires Zn(2+) as cofactor. The thioether cross-link between Cys-93 and Tyr-158 plays a structural role through stabilizing the Fe(2+) ion, and prevents the production of highly damaging free hydroxyl radicals by holding the oxygen radical via hydroxyl hydrogen.

The enzyme catalyses L-cysteine + O2 = 3-sulfino-L-alanine + H(+). Its pathway is organosulfur biosynthesis; taurine biosynthesis; hypotaurine from L-cysteine: step 1/2. Its function is as follows. Catalyzes the oxidation of cysteine to cysteine sulfinic acid with addition of molecular dioxygen. The chain is Cysteine dioxygenase type 1 (cdo1) from Danio rerio (Zebrafish).